The following is a 451-amino-acid chain: tRNA-2-methylthio-N(6)-dimethylallyladenosine synthase (451 aa).

The MTTase N-terminal domain occupies 10–128 (KKFYTLTFGC…FPQLLEHVMQ (119 aa)). [4Fe-4S] cluster is bound by residues Cys-19, Cys-55, Cys-89, Cys-165, Cys-169, and Cys-172. One can recognise a Radical SAM core domain in the interval 151–381 (REDSIKAWVV…ISVQQEISEQ (231 aa)). The 64-residue stretch at 384–447 (KDLENTVQRI…SWNLYGEIFE (64 aa)) folds into the TRAM domain.

The protein belongs to the methylthiotransferase family. MiaB subfamily. Monomer. Requires [4Fe-4S] cluster as cofactor.

It localises to the cytoplasm. It catalyses the reaction N(6)-dimethylallyladenosine(37) in tRNA + (sulfur carrier)-SH + AH2 + 2 S-adenosyl-L-methionine = 2-methylsulfanyl-N(6)-dimethylallyladenosine(37) in tRNA + (sulfur carrier)-H + 5'-deoxyadenosine + L-methionine + A + S-adenosyl-L-homocysteine + 2 H(+). Catalyzes the methylthiolation of N6-(dimethylallyl)adenosine (i(6)A), leading to the formation of 2-methylthio-N6-(dimethylallyl)adenosine (ms(2)i(6)A) at position 37 in tRNAs that read codons beginning with uridine. The chain is tRNA-2-methylthio-N(6)-dimethylallyladenosine synthase from Natranaerobius thermophilus (strain ATCC BAA-1301 / DSM 18059 / JW/NM-WN-LF).